We begin with the raw amino-acid sequence, 82 residues long: Small ribosomal subunit protein uS17 (82 aa).

The protein belongs to the universal ribosomal protein uS17 family. As to quaternary structure, part of the 30S ribosomal subunit.

One of the primary rRNA binding proteins, it binds specifically to the 5'-end of 16S ribosomal RNA. This is Small ribosomal subunit protein uS17 from Shewanella pealeana (strain ATCC 700345 / ANG-SQ1).